The chain runs to 65 residues: Large ribosomal subunit protein bL35 (65 aa).

Belongs to the bacterial ribosomal protein bL35 family.

This Clostridium botulinum (strain Loch Maree / Type A3) protein is Large ribosomal subunit protein bL35.